Consider the following 339-residue polypeptide: MFDSVKIAWLVALGAAQVAATALPAFNVNPNSVSVSGLSSGGYMAAQLGVAYSDVFNVGFGVFAGGPYDCARNQYYTSCMYNGYPSITTPTANMKSWSGNQIASVANLGQRKIYMWTGSSDTTVGPNVMNQLKAQLGNFDNSANVSYVTTTGAVHTFPTDFNGAGDNSCSLSTSPYISNCNYDGAGAALKWIYGSLNARNTGTLSGSVLSFAQSGSYGANGMDTTGYLYVPQSCASGATVCSLHVALHGCLQSYSSIGSRFIQNTGYNKWADTNNMIILYPQAIPDYTIHAIWNGGVLSNPNGCWDWVGWYGSNADQIGGVQMAAIVGQVKQIVSGFQG.

Residues 1-20 form the signal peptide; it reads MFDSVKIAWLVALGAAQVAA. The active site involves Ser-39. A disulfide bridge connects residues Cys-70 and Cys-79. Asp-121 is an active-site residue. N-linked (GlcNAc...) asparagine glycosylation occurs at Asn-144. His-155 is a catalytic residue. Intrachain disulfides connect Cys-169-Cys-180, Cys-234-Cys-241, and Cys-250-Cys-304. Position 307 (Trp-307) interacts with (3R)-hydroxybutanoate trimer.

This sequence belongs to the carbohydrate esterase 1 (CE1) family.

The protein resides in the secreted. The enzyme catalyses [(3R)-hydroxybutanoate](n) + H2O = [(3R)-hydroxybutanoate](n-1) + (R)-3-hydroxybutanoate + H(+). With respect to regulation, the enzyme is completely inhibited by dithiothreitol (DTT) and diisopropylfluorophosphate (DFP), and partially inhibited by HgCl(2) and by enzyme3-(p-nitrophenoxy)propane (EPNP). Activity is not affected by N-ethylmaleimide (NEM) or phenylmethylsulfonyl fluoride (PMSF). Esterase involved in the hydrolysis of polyhydroxybutyrate, a microbial polyester that can be produced from renewable resources. The chain is Polyhydroxybutyrate depolymerase from Talaromyces funiculosus (Fruitlet core rot fungus).